Consider the following 280-residue polypeptide: Putative transcription factor kapC (280 aa).

Positions 1-102 (MQPALAPHPS…GKRPLSTSKR (102 aa)) are disordered. Positions 39–49 (PQPPAPQPPHM) are enriched in pro residues. A compositionally biased stretch (polar residues) spans 79-89 (TQPDVTGQETP). Residues 96–159 (PLSTSKRAAQ…EYIINLQSRL (64 aa)) enclose the bZIP domain. The tract at residues 97–120 (LSTSKRAAQNRAAQRAFRQRKEAH) is basic motif. The segment at 124–155 (LEGKVKAYENMGEAIKALQAENYQLREYIINL) is leucine-zipper. A disordered region spans residues 169 to 280 (LPGNIDLSQP…EQTHGLPLIS (112 aa)). A compositionally biased stretch (pro residues) spans 197 to 211 (APPPTAPQQPQPPHA).

The protein belongs to the bZIP family.

Its subcellular location is the nucleus. Its function is as follows. Putative transcription factor. In Neosartorya fischeri (strain ATCC 1020 / DSM 3700 / CBS 544.65 / FGSC A1164 / JCM 1740 / NRRL 181 / WB 181) (Aspergillus fischerianus), this protein is Putative transcription factor kapC (kapC).